The following is a 358-amino-acid chain: MSIQTDDFAAPPPKRILSGAPASPNEEAVERALRPKLLDEYVGQAKVREQLEIFISAARMRDEALDHVLLFGPPGLGKTTLSHIIAHELGVNLRQTSGPVLEKPKDLAALLTNLEKNDVLFIDEIHRLSPVVEEILYPALEDYKIDIMIGEGPAARSIKLDLQPFTLIGATTRAGMLTNPLRDRFGIVARLEFYSPEELASIVRRSAGLLKVPTDEKGGFEIARRSRGTPRIANRLLRRVRDYADVKGAGEITLDIAHRALVMLDVDPQGFDLMDRKLLEAVIHRFDGGPVGLDNIAASIGEERETIEDVIEPYLIQQGYLQRTPRGRIATLAAYKHLGVTPPAAQSGGDMFGAMRPE.

The disordered stretch occupies residues methionine 1–proline 24. The segment at threonine 5–tyrosine 194 is large ATPase domain (RuvB-L). ATP contacts are provided by residues leucine 33, arginine 34, glycine 75, lysine 78, threonine 79, threonine 80, glutamate 141 to tyrosine 143, arginine 184, tyrosine 194, and arginine 231. Threonine 79 is a Mg(2+) binding site. A small ATPAse domain (RuvB-S) region spans residues serine 195–aspartate 265. The head domain (RuvB-H) stretch occupies residues proline 268 to glutamate 358. Arginine 304, arginine 323, and arginine 328 together coordinate DNA.

The protein belongs to the RuvB family. In terms of assembly, homohexamer. Forms an RuvA(8)-RuvB(12)-Holliday junction (HJ) complex. HJ DNA is sandwiched between 2 RuvA tetramers; dsDNA enters through RuvA and exits via RuvB. An RuvB hexamer assembles on each DNA strand where it exits the tetramer. Each RuvB hexamer is contacted by two RuvA subunits (via domain III) on 2 adjacent RuvB subunits; this complex drives branch migration. In the full resolvosome a probable DNA-RuvA(4)-RuvB(12)-RuvC(2) complex forms which resolves the HJ.

It localises to the cytoplasm. The enzyme catalyses ATP + H2O = ADP + phosphate + H(+). Its function is as follows. The RuvA-RuvB-RuvC complex processes Holliday junction (HJ) DNA during genetic recombination and DNA repair, while the RuvA-RuvB complex plays an important role in the rescue of blocked DNA replication forks via replication fork reversal (RFR). RuvA specifically binds to HJ cruciform DNA, conferring on it an open structure. The RuvB hexamer acts as an ATP-dependent pump, pulling dsDNA into and through the RuvAB complex. RuvB forms 2 homohexamers on either side of HJ DNA bound by 1 or 2 RuvA tetramers; 4 subunits per hexamer contact DNA at a time. Coordinated motions by a converter formed by DNA-disengaged RuvB subunits stimulates ATP hydrolysis and nucleotide exchange. Immobilization of the converter enables RuvB to convert the ATP-contained energy into a lever motion, pulling 2 nucleotides of DNA out of the RuvA tetramer per ATP hydrolyzed, thus driving DNA branch migration. The RuvB motors rotate together with the DNA substrate, which together with the progressing nucleotide cycle form the mechanistic basis for DNA recombination by continuous HJ branch migration. Branch migration allows RuvC to scan DNA until it finds its consensus sequence, where it cleaves and resolves cruciform DNA. The polypeptide is Holliday junction branch migration complex subunit RuvB (Albidiferax ferrireducens (strain ATCC BAA-621 / DSM 15236 / T118) (Rhodoferax ferrireducens)).